A 417-amino-acid polypeptide reads, in one-letter code: Serine hydroxymethyltransferase 1 (417 aa).

(6S)-5,6,7,8-tetrahydrofolate contacts are provided by residues Leu121 and 125-127 (GHL). An N6-(pyridoxal phosphate)lysine modification is found at Lys229. 354–356 (SPF) serves as a coordination point for (6S)-5,6,7,8-tetrahydrofolate.

Belongs to the SHMT family. As to quaternary structure, homodimer. The cofactor is pyridoxal 5'-phosphate.

The protein resides in the cytoplasm. It catalyses the reaction (6R)-5,10-methylene-5,6,7,8-tetrahydrofolate + glycine + H2O = (6S)-5,6,7,8-tetrahydrofolate + L-serine. It participates in one-carbon metabolism; tetrahydrofolate interconversion. The protein operates within amino-acid biosynthesis; glycine biosynthesis; glycine from L-serine: step 1/1. Catalyzes the reversible interconversion of serine and glycine with tetrahydrofolate (THF) serving as the one-carbon carrier. This reaction serves as the major source of one-carbon groups required for the biosynthesis of purines, thymidylate, methionine, and other important biomolecules. Also exhibits THF-independent aldolase activity toward beta-hydroxyamino acids, producing glycine and aldehydes, via a retro-aldol mechanism. The protein is Serine hydroxymethyltransferase 1 of Pseudomonas fluorescens (strain ATCC BAA-477 / NRRL B-23932 / Pf-5).